Reading from the N-terminus, the 630-residue chain is tRNA uridine 5-carboxymethylaminomethyl modification enzyme MnmG (630 aa).

FAD is bound at residue 13-18; that stretch reads GGGHAG. 273–287 serves as a coordination point for NAD(+); sequence GPRYCPSIEDKVNRF.

The protein belongs to the MnmG family. As to quaternary structure, homodimer. Heterotetramer of two MnmE and two MnmG subunits. It depends on FAD as a cofactor.

The protein localises to the cytoplasm. In terms of biological role, NAD-binding protein involved in the addition of a carboxymethylaminomethyl (cmnm) group at the wobble position (U34) of certain tRNAs, forming tRNA-cmnm(5)s(2)U34. The sequence is that of tRNA uridine 5-carboxymethylaminomethyl modification enzyme MnmG from Teredinibacter turnerae (strain ATCC 39867 / T7901).